We begin with the raw amino-acid sequence, 118 residues long: HTH-type transcriptional regulator SarT (118 aa).

The H-T-H motif DNA-binding region spans 55–78 (MRDIISYIGIDQSRIVKSVKDLSK).

Belongs to the SarA family.

The protein resides in the cytoplasm. Its function is as follows. Transcriptional regulator acting as an intermediary between major regulators sarA and agr and virulence genes. Represses alpha-hemolysin (hla) gene expression. Down-regulates agr RNAIII expression by repressing sarU, a positive activator of agr expression. Up-regulates sarS, which induces the expression of the cell wall-associated protein A (spa). The polypeptide is HTH-type transcriptional regulator SarT (sarT) (Staphylococcus aureus (strain NCTC 8325 / PS 47)).